A 155-amino-acid chain; its full sequence is Protein-export protein SecB (155 aa).

Belongs to the SecB family. Homotetramer, a dimer of dimers. One homotetramer interacts with 1 SecA dimer.

It localises to the cytoplasm. One of the proteins required for the normal export of preproteins out of the cell cytoplasm. It is a molecular chaperone that binds to a subset of precursor proteins, maintaining them in a translocation-competent state. It also specifically binds to its receptor SecA. The protein is Protein-export protein SecB of Paramagnetospirillum magneticum (strain ATCC 700264 / AMB-1) (Magnetospirillum magneticum).